Here is a 429-residue protein sequence, read N- to C-terminus: Adenylosuccinate synthetase (429 aa).

GTP-binding positions include 11-17 (GDEGKGK) and 39-41 (GHT). The active-site Proton acceptor is D12. The Mg(2+) site is built by D12 and G39. IMP-binding positions include 12 to 15 (DEGK), 37 to 40 (NAGH), T130, R144, N226, T241, and R305. H40 (proton donor) is an active-site residue. Residue 301–307 (VTTGRRR) participates in substrate binding. GTP is bound by residues R307, 333–335 (KLD), and 415–417 (GVG).

It belongs to the adenylosuccinate synthetase family. Homodimer. Mg(2+) is required as a cofactor.

It is found in the cytoplasm. The catalysed reaction is IMP + L-aspartate + GTP = N(6)-(1,2-dicarboxyethyl)-AMP + GDP + phosphate + 2 H(+). The protein operates within purine metabolism; AMP biosynthesis via de novo pathway; AMP from IMP: step 1/2. Its function is as follows. Plays an important role in the de novo pathway and in the salvage pathway of purine nucleotide biosynthesis. Catalyzes the first committed step in the biosynthesis of AMP from IMP. The protein is Adenylosuccinate synthetase of Yarrowia lipolytica (strain CLIB 122 / E 150) (Yeast).